The chain runs to 628 residues: MALVSAVPLNSKLCLCRTLFGFSHELKAIHSTVPNLGMCRGGKSIAPSMSMSSTTSVSNEDEAPRRIAGHHSNLWDDDSIASLSTSYEAPSYREGADRLIGEVKNIFDLMSVEDGVFTSPLSDLHHRLWMVDSVERLGIDRHFKDEINSALDHVYSYWTEKGIGRGREGGVTDLNSTALGLRTLRLHGYTVSSHVLDHLKNEKGQFTCSAIQTEGEIRDVLNLFRASLIAFPGEKIMEAAEIFSTMYLKDALQKIPPSGLSQEIEYLLEFGWHTNLPRMETRMYIDVFGEDTTFETPYLIREKLLELAKLEFNIFHSLVKRELQSLSRWWKDYGFPEITFSRHRHVEYYTLAACIANDPKHSAFRLGFGKISHMITILDDIYDTFGTMEELELLTAAFKRWDPSSIECLPDYMKGVYMAVYDNINEMAREAQKIQGWDTVSYARKSWEAFIGAYIQEAKWISSGYLPTFDEYLENGKVSFGSRITTLEPMLTLGFPLPPRILQEIDFPSKFNDLTCAILRLKGDTQCYKADRARGEEASAVSCYMKDHPGITEEDAVNQVNAMVDNLTKELNWELLRPDSGVPISYKKVAFDICRVFHYGYKYRDGFSVASVEIKNLVTRTVVETVPL.

The transit peptide at 1–18 directs the protein to the chloroplast; the sequence is MALVSAVPLNSKLCLCRT. Positions 379, 383, and 531 each coordinate Mg(2+). Residues 379 to 383 carry the DDXXD motif motif; sequence DDIYD.

It belongs to the terpene synthase family. Tpsd subfamily. It depends on Mg(2+) as a cofactor. Mn(2+) is required as a cofactor.

Its subcellular location is the plastid. The protein localises to the chloroplast. It catalyses the reaction (2E)-geranyl diphosphate = (1R,5R)-alpha-pinene + diphosphate. It participates in terpene metabolism; oleoresin biosynthesis. The protein operates within secondary metabolite biosynthesis; terpenoid biosynthesis. Monoterpene synthase (TPS) involved in the biosynthesis of monoterpene natural products included in conifer oleoresin secretions and volatile emissions; these compounds contribute to biotic and abiotic stress defense against herbivores and pathogens. Catalyzes the conversion of (2E)-geranyl diphosphate (GPP) to (+)-alpha-pinene. The polypeptide is (+)-alpha pinene synthase 1, chloroplastic (Pinus banksiana (Jack pine)).